Consider the following 442-residue polypeptide: Ribosomal protein uS12 methylthiotransferase RimO (442 aa).

The MTTase N-terminal domain occupies 9–119; sequence PRIGFVSLGC…VLSHVHQYVP (111 aa). [4Fe-4S] cluster-binding residues include Cys-18, Cys-54, Cys-83, Cys-151, Cys-155, and Cys-158. The region spanning 137 to 375 is the Radical SAM core domain; sequence LTPRHYAYLK…QLQQAISTQR (239 aa). A TRAM domain is found at 377 to 442; sequence QDKIGREVLV…DEYDLWGSRV (66 aa).

It belongs to the methylthiotransferase family. RimO subfamily. [4Fe-4S] cluster is required as a cofactor.

The protein resides in the cytoplasm. It catalyses the reaction L-aspartate(89)-[ribosomal protein uS12]-hydrogen + (sulfur carrier)-SH + AH2 + 2 S-adenosyl-L-methionine = 3-methylsulfanyl-L-aspartate(89)-[ribosomal protein uS12]-hydrogen + (sulfur carrier)-H + 5'-deoxyadenosine + L-methionine + A + S-adenosyl-L-homocysteine + 2 H(+). Catalyzes the methylthiolation of an aspartic acid residue of ribosomal protein uS12. This is Ribosomal protein uS12 methylthiotransferase RimO from Pectobacterium atrosepticum (strain SCRI 1043 / ATCC BAA-672) (Erwinia carotovora subsp. atroseptica).